A 277-amino-acid polypeptide reads, in one-letter code: Diaminopimelate epimerase (277 aa).

Residues asparagine 13, glutamine 46, and asparagine 66 each coordinate substrate. Residue cysteine 75 is the Proton donor of the active site. Residues 76 to 77 (GN), asparagine 160, asparagine 193, and 211 to 212 (ER) contribute to the substrate site. The Proton acceptor role is filled by cysteine 220. Residue 221 to 222 (GT) coordinates substrate.

Belongs to the diaminopimelate epimerase family. Homodimer.

The protein localises to the cytoplasm. It carries out the reaction (2S,6S)-2,6-diaminopimelate = meso-2,6-diaminopimelate. The protein operates within amino-acid biosynthesis; L-lysine biosynthesis via DAP pathway; DL-2,6-diaminopimelate from LL-2,6-diaminopimelate: step 1/1. In terms of biological role, catalyzes the stereoinversion of LL-2,6-diaminopimelate (L,L-DAP) to meso-diaminopimelate (meso-DAP), a precursor of L-lysine and an essential component of the bacterial peptidoglycan. The protein is Diaminopimelate epimerase of Saccharophagus degradans (strain 2-40 / ATCC 43961 / DSM 17024).